A 467-amino-acid chain; its full sequence is Septin-10 (467 aa).

Positions 63–329 (QGFCFNILCV…ELYRRCKLEE (267 aa)) constitute a Septin-type G domain. Residues 73-80 (GETGIGKS) form a G1 motif region. Residues 73 to 80 (GETGIGKS), Gly-128, 209 to 217 (KADTVSKTE), Gly-263, and Arg-278 contribute to the GTP site. Residues 125–128 (NTVG) are G3 motif. The tract at residues 208–211 (AKAD) is G4 motif.

This sequence belongs to the TRAFAC class TrmE-Era-EngA-EngB-Septin-like GTPase superfamily. Septin GTPase family. Septins polymerize into heterooligomeric protein complexes that form filaments, and can associate with cellular membranes, actin filaments and microtubules. GTPase activity is required for filament formation. Interacts with ADGB. In terms of processing, proteolytically cleaved in vitro in a calmodulin-dependent manner.

It localises to the cytoplasm. The protein localises to the cytoskeleton. The protein resides in the cell projection. It is found in the cilium. Its subcellular location is the flagellum. In terms of biological role, filament-forming cytoskeletal GTPase. May play a role in cytokinesis (Potential). The sequence is that of Septin-10 from Pongo abelii (Sumatran orangutan).